Consider the following 95-residue polypeptide: Aspartyl/glutamyl-tRNA(Asn/Gln) amidotransferase subunit C (95 aa).

It belongs to the GatC family. In terms of assembly, heterotrimer of A, B and C subunits.

The catalysed reaction is L-glutamyl-tRNA(Gln) + L-glutamine + ATP + H2O = L-glutaminyl-tRNA(Gln) + L-glutamate + ADP + phosphate + H(+). It carries out the reaction L-aspartyl-tRNA(Asn) + L-glutamine + ATP + H2O = L-asparaginyl-tRNA(Asn) + L-glutamate + ADP + phosphate + 2 H(+). Functionally, allows the formation of correctly charged Asn-tRNA(Asn) or Gln-tRNA(Gln) through the transamidation of misacylated Asp-tRNA(Asn) or Glu-tRNA(Gln) in organisms which lack either or both of asparaginyl-tRNA or glutaminyl-tRNA synthetases. The reaction takes place in the presence of glutamine and ATP through an activated phospho-Asp-tRNA(Asn) or phospho-Glu-tRNA(Gln). The protein is Aspartyl/glutamyl-tRNA(Asn/Gln) amidotransferase subunit C of Chlorobium phaeovibrioides (strain DSM 265 / 1930) (Prosthecochloris vibrioformis (strain DSM 265)).